The sequence spans 195 residues: Probable DNA-directed RNA polymerase subunit delta (195 aa).

The HTH HARE-type domain maps to phenylalanine 14–tryptophan 81. 2 stretches are compositionally biased toward acidic residues: residues aspartate 120–isoleucine 172 and glycine 181–lysine 195. The segment at aspartate 120 to lysine 195 is disordered.

It belongs to the RpoE family. In terms of assembly, RNAP is composed of a core of 2 alpha, a beta and a beta' subunits. The core is associated with a delta subunit and one of several sigma factors.

Participates in both the initiation and recycling phases of transcription. In the presence of the delta subunit, RNAP displays an increased specificity of transcription, a decreased affinity for nucleic acids, and an increased efficiency of RNA synthesis because of enhanced recycling. The polypeptide is Probable DNA-directed RNA polymerase subunit delta (Leuconostoc mesenteroides subsp. mesenteroides (strain ATCC 8293 / DSM 20343 / BCRC 11652 / CCM 1803 / JCM 6124 / NCDO 523 / NBRC 100496 / NCIMB 8023 / NCTC 12954 / NRRL B-1118 / 37Y)).